A 255-amino-acid polypeptide reads, in one-letter code: Imidazole glycerol phosphate synthase subunit HisF (255 aa).

Residues Asp11 and Asp130 contribute to the active site.

This sequence belongs to the HisA/HisF family. Heterodimer of HisH and HisF.

Its subcellular location is the cytoplasm. The catalysed reaction is 5-[(5-phospho-1-deoxy-D-ribulos-1-ylimino)methylamino]-1-(5-phospho-beta-D-ribosyl)imidazole-4-carboxamide + L-glutamine = D-erythro-1-(imidazol-4-yl)glycerol 3-phosphate + 5-amino-1-(5-phospho-beta-D-ribosyl)imidazole-4-carboxamide + L-glutamate + H(+). It functions in the pathway amino-acid biosynthesis; L-histidine biosynthesis; L-histidine from 5-phospho-alpha-D-ribose 1-diphosphate: step 5/9. IGPS catalyzes the conversion of PRFAR and glutamine to IGP, AICAR and glutamate. The HisF subunit catalyzes the cyclization activity that produces IGP and AICAR from PRFAR using the ammonia provided by the HisH subunit. This chain is Imidazole glycerol phosphate synthase subunit HisF, found in Prochlorococcus marinus subsp. pastoris (strain CCMP1986 / NIES-2087 / MED4).